We begin with the raw amino-acid sequence, 360 residues long: Chorismate synthase (360 aa).

Arg46 serves as a coordination point for NADP(+). Residues 123-125, 235-236, Gly275, 290-294, and Arg316 each bind FMN; these read RSS, NA, and KPTPS.

Belongs to the chorismate synthase family. As to quaternary structure, homotetramer. It depends on FMNH2 as a cofactor.

The catalysed reaction is 5-O-(1-carboxyvinyl)-3-phosphoshikimate = chorismate + phosphate. Its pathway is metabolic intermediate biosynthesis; chorismate biosynthesis; chorismate from D-erythrose 4-phosphate and phosphoenolpyruvate: step 7/7. Functionally, catalyzes the anti-1,4-elimination of the C-3 phosphate and the C-6 proR hydrogen from 5-enolpyruvylshikimate-3-phosphate (EPSP) to yield chorismate, which is the branch point compound that serves as the starting substrate for the three terminal pathways of aromatic amino acid biosynthesis. This reaction introduces a second double bond into the aromatic ring system. The sequence is that of Chorismate synthase from Wolinella succinogenes (strain ATCC 29543 / DSM 1740 / CCUG 13145 / JCM 31913 / LMG 7466 / NCTC 11488 / FDC 602W) (Vibrio succinogenes).